The following is a 219-amino-acid chain: 7-cyano-7-deazaguanine synthase (219 aa).

Position 10 to 20 (10 to 20 (FSGGQDSTTCL)) interacts with ATP. Cys-188, Cys-197, Cys-200, and Cys-203 together coordinate Zn(2+).

It belongs to the QueC family. As to quaternary structure, homodimer. Requires Zn(2+) as cofactor.

It carries out the reaction 7-carboxy-7-deazaguanine + NH4(+) + ATP = 7-cyano-7-deazaguanine + ADP + phosphate + H2O + H(+). It participates in purine metabolism; 7-cyano-7-deazaguanine biosynthesis. Functionally, catalyzes the ATP-dependent conversion of 7-carboxy-7-deazaguanine (CDG) to 7-cyano-7-deazaguanine (preQ(0)). The polypeptide is 7-cyano-7-deazaguanine synthase (Clostridium botulinum (strain Loch Maree / Type A3)).